We begin with the raw amino-acid sequence, 493 residues long: Ribose import ATP-binding protein RbsA (493 aa).

2 ABC transporter domains span residues 3-239 (IEMK…VGRE) and 246-493 (KRTP…TGGR). Residue 35-42 (GENGAGKS) participates in ATP binding.

The protein belongs to the ABC transporter superfamily. Ribose importer (TC 3.A.1.2.1) family. In terms of assembly, the complex is composed of an ATP-binding protein (RbsA), two transmembrane proteins (RbsC) and a solute-binding protein (RbsB).

Its subcellular location is the cell membrane. It carries out the reaction D-ribose(out) + ATP + H2O = D-ribose(in) + ADP + phosphate + H(+). Part of the ABC transporter complex RbsABC involved in ribose import. Responsible for energy coupling to the transport system. The protein is Ribose import ATP-binding protein RbsA of Bacillus subtilis (strain 168).